We begin with the raw amino-acid sequence, 506 residues long: RNA-splicing ligase RtcB homolog (506 aa).

The Mn(2+) site is built by Asp120, Cys123, His228, His260, and His354. 227–231 (NHYAE) serves as a coordination point for GMP. Residues 354–355 (HN), 403–406 (GGTM), Ser410, 429–432 (HGAG), and Lys505 each bind GMP. Catalysis depends on His429, which acts as the GMP-histidine intermediate.

The protein belongs to the RtcB family. As to quaternary structure, catalytic component of the tRNA-splicing ligase complex. Requires Mn(2+) as cofactor.

It carries out the reaction a 3'-end 3'-phospho-ribonucleotide-RNA + a 5'-end dephospho-ribonucleoside-RNA + GTP = a ribonucleotidyl-ribonucleotide-RNA + GMP + diphosphate. The catalysed reaction is a 3'-end 2',3'-cyclophospho-ribonucleotide-RNA + a 5'-end dephospho-ribonucleoside-RNA + GTP + H2O = a ribonucleotidyl-ribonucleotide-RNA + GMP + diphosphate + H(+). Its function is as follows. Catalytic subunit of the tRNA-splicing ligase complex that acts by directly joining spliced tRNA halves to mature-sized tRNAs by incorporating the precursor-derived splice junction phosphate into the mature tRNA as a canonical 3',5'-phosphodiester. May act as an RNA ligase with broad substrate specificity, and may function toward other RNAs. The chain is RNA-splicing ligase RtcB homolog from Plasmodium falciparum (isolate 3D7).